A 237-amino-acid polypeptide reads, in one-letter code: MQFSPTNGDFTFVSSTDAEELSGTIDAPDITLNMGPESNRDTYATTFLRQRGYGWLLEVEEEESEDTKPLLEELDIDLKDIYYKIRCVLMPMPSLGFNRQVVRDNPDFWGPLAVVLLFSMISIYGQFRVVSWIITIWIFGSLTIFLLARVLGGEVSYGQVLGVIGYSLLPLIVIAPLLLVIGGFEVVSTLIKLFGVFWAAYSAASLLVGDEFKTKKPLLIYPIFLLYIYFLSLYTGV.

Residues 1–106 (MQFSPTNGDF…FNRQVVRDNP (106 aa)) lie on the Cytoplasmic side of the membrane. The helical transmembrane segment at 107 to 127 (DFWGPLAVVLLFSMISIYGQF) threads the bilayer. At 128 to 131 (RVVS) the chain is on the lumenal side. The chain crosses the membrane as a helical span at residues 132-152 (WIITIWIFGSLTIFLLARVLG). Over 153 to 160 (GEVSYGQV) the chain is Cytoplasmic. The helical transmembrane segment at 161 to 181 (LGVIGYSLLPLIVIAPLLLVI) threads the bilayer. The Lumenal segment spans residues 182–188 (GGFEVVS). The helical transmembrane segment at 189–209 (TLIKLFGVFWAAYSAASLLVG) threads the bilayer. Residues 210 to 216 (DEFKTKK) are Cytoplasmic-facing. A helical transmembrane segment spans residues 217–237 (PLLIYPIFLLYIYFLSLYTGV).

This sequence belongs to the YIP1 family.

It is found in the golgi apparatus. The protein resides in the cis-Golgi network membrane. In terms of biological role, involved in the maintenance of the Golgi structure. The chain is Protein YIPF4 (yipf4) from Danio rerio (Zebrafish).